A 191-amino-acid polypeptide reads, in one-letter code: Thymidylate kinase (191 aa).

ATP is bound at residue 7 to 14; it reads GIDGVGKS.

This sequence belongs to the thymidylate kinase family.

It catalyses the reaction dTMP + ATP = dTDP + ADP. Functionally, phosphorylation of dTMP to form dTDP in both de novo and salvage pathways of dTTP synthesis. This Helicobacter acinonychis (strain Sheeba) protein is Thymidylate kinase.